The chain runs to 98 residues: NADH-ubiquinone oxidoreductase chain 4L (98 aa).

A run of 3 helical transmembrane segments spans residues 1–21 (MHYI…GALL), 29–49 (SLLC…LIAL), and 61–81 (IILL…LVMV).

This sequence belongs to the complex I subunit 4L family. Core subunit of respiratory chain NADH dehydrogenase (Complex I) which is composed of 45 different subunits.

The protein localises to the mitochondrion inner membrane. The enzyme catalyses a ubiquinone + NADH + 5 H(+)(in) = a ubiquinol + NAD(+) + 4 H(+)(out). Functionally, core subunit of the mitochondrial membrane respiratory chain NADH dehydrogenase (Complex I) which catalyzes electron transfer from NADH through the respiratory chain, using ubiquinone as an electron acceptor. Part of the enzyme membrane arm which is embedded in the lipid bilayer and involved in proton translocation. The protein is NADH-ubiquinone oxidoreductase chain 4L (MT-ND4L) of Procavia capensis (Rock hyrax).